The sequence spans 272 residues: Formamidopyrimidine-DNA glycosylase (272 aa).

Pro2 acts as the Schiff-base intermediate with DNA in catalysis. The active-site Proton donor is the Glu3. Lys58 acts as the Proton donor; for beta-elimination activity in catalysis. DNA-binding residues include His93, Arg112, and Arg153. The FPG-type zinc finger occupies 238–272 (HVYGKSGQHCPKCGNILEDLKISNRGTVYCPHCQR). The active-site Proton donor; for delta-elimination activity is Arg262.

The protein belongs to the FPG family. In terms of assembly, monomer. It depends on Zn(2+) as a cofactor.

The catalysed reaction is Hydrolysis of DNA containing ring-opened 7-methylguanine residues, releasing 2,6-diamino-4-hydroxy-5-(N-methyl)formamidopyrimidine.. The enzyme catalyses 2'-deoxyribonucleotide-(2'-deoxyribose 5'-phosphate)-2'-deoxyribonucleotide-DNA = a 3'-end 2'-deoxyribonucleotide-(2,3-dehydro-2,3-deoxyribose 5'-phosphate)-DNA + a 5'-end 5'-phospho-2'-deoxyribonucleoside-DNA + H(+). Its function is as follows. Involved in base excision repair of DNA damaged by oxidation or by mutagenic agents. Acts as a DNA glycosylase that recognizes and removes damaged bases. Has a preference for oxidized purines, such as 7,8-dihydro-8-oxoguanine (8-oxoG). Has AP (apurinic/apyrimidinic) lyase activity and introduces nicks in the DNA strand. Cleaves the DNA backbone by beta-delta elimination to generate a single-strand break at the site of the removed base with both 3'- and 5'-phosphates. In Dichelobacter nodosus (strain VCS1703A), this protein is Formamidopyrimidine-DNA glycosylase.